A 549-amino-acid polypeptide reads, in one-letter code: Chaperonin GroEL 2 (549 aa).

ATP-binding positions include 30–33, lysine 51, 87–91, glycine 415, 479–481, and aspartate 495; these read TLGP, DGTTT, and NAA.

This sequence belongs to the chaperonin (HSP60) family. Forms a cylinder of 14 subunits composed of two heptameric rings stacked back-to-back. Interacts with the co-chaperonin GroES.

It is found in the cytoplasm. It carries out the reaction ATP + H2O + a folded polypeptide = ADP + phosphate + an unfolded polypeptide.. In terms of biological role, together with its co-chaperonin GroES, plays an essential role in assisting protein folding. The GroEL-GroES system forms a nano-cage that allows encapsulation of the non-native substrate proteins and provides a physical environment optimized to promote and accelerate protein folding. This Polaromonas naphthalenivorans (strain CJ2) protein is Chaperonin GroEL 2.